The following is a 338-amino-acid chain: Protein FosB (338 aa).

2 disordered regions span residues M1–F54 and A80–L179. Polar residues-rich tracts occupy residues S13 to S31 and T102 to Y112. Residue S27 is modified to Phosphoserine. The span at P123 to P137 shows a compositional bias: low complexity. Residues E155 to H218 enclose the bZIP domain. Positions K157–R182 are basic motif. Residues L183–L211 are leucine-zipper. 2 disordered regions span residues C222–L276 and G316–L338. The segment covering L256 to P265 has biased composition (pro residues). Polar residues-rich tracts occupy residues F266–L276 and Q318–L338.

The protein belongs to the bZIP family. Fos subfamily. As to quaternary structure, heterodimer; binds to DNA as heterodimer. Component of an AP-1 transcription factor complex; composed of FOS-JUN heterodimers. As part of the AP-1 transcription factor complex, forms heterodimers with JUN, JUNB or JUND, thereby binding to the AP-1 consensus sequence and stimulating transcription. Interacts with the BAF multiprotein chromatin-remodeling complex subunits SMARCB1 and SMARCD1. Interacts with ARID1A and JUN. Homodimer under oxidizing conditions and monomer under reducing conditions (in vitro). Heterodimer; binds to DNA as heterodimer. Forms heterodimers with JUNB, JUN or JUND; thereby binding to the AP-1 consensus sequence but does not stimulate transcription. Forms heterodimers with JUND under oxidizing conditions. Phosphorylated. Post-translationally, phosphorylated at Ser-27 by CSNK2A1; phosphorylation increases protein stability and transactivation potential. In terms of tissue distribution, expressed in brain, including the preoptic area of the hypothalamus, the main and accessory olfactory bulbs, the pyriform cortex and the hippocampus (at protein level). Expressed in the neurons of the subgranular zone of the dentate gyrus in the hippocampus (at protein level). Expressed in pyramidal cells in CA1 and CA3, in the dentate gyrus and the nucleus accumbens of the striatum (at protein level). Expressed in the core and shell of the nucleus accumbens of the striatum (at protein level). Expressed in the neurons of the subgranular zone of the dentate gyrus in the hippocampus (at protein level).

The protein resides in the nucleus. Its function is as follows. Heterodimerizes with proteins of the JUN family to form an AP-1 transcription factor complex, thereby enhancing their DNA binding activity to gene promoters containing an AP-1 consensus sequence 5'-TGA[GC]TCA-3' and enhancing their transcriptional activity. As part of the AP-1 complex, facilitates enhancer selection together with cell-type-specific transcription factors by collaboratively binding to nucleosomal enhancers and recruiting the SWI/SNF (BAF) chromatin remodeling complex to establish accessible chromatin. Together with JUN, plays a role in activation-induced cell death of T cells by binding to the AP-1 promoter site of FASLG/CD95L, and inducing its transcription in response to activation of the TCR/CD3 signaling pathway. Exhibits transactivation activity in vitro. Involved in the display of nurturing behavior towards newborns. May play a role in neurogenesis in the hippocampus and in learning and memory-related tasks by regulating the expression of various genes involved in neurogenesis, depression and epilepsy. Implicated in behavioral responses related to morphine reward and spatial memory. Exhibits lower transactivation activity than isoform 1 in vitro. The heterodimer with JUN does not display any transcriptional activity, and may thereby act as an transcriptional inhibitor. May be involved in the regulation of neurogenesis in the hippocampus. May play a role in synaptic modifications in nucleus accumbens medium spiny neurons and thereby play a role in adaptive and pathological reward-dependent learning, including maladaptive responses involved in drug addiction. Seems to be more stably expressed with a half-life of ~9.5 hours in cell culture as compared to 1.5 hours half-life of isoform 1. This chain is Protein FosB, found in Mus musculus (Mouse).